The primary structure comprises 280 residues: Putative transcription factor kapC (280 aa).

A disordered region spans residues 1 to 102 (MQPALAPHPS…GKRPLSTSKR (102 aa)). Positions 39-49 (PQPPAPQPPHM) are enriched in pro residues. Polar residues predominate over residues 79–89 (TQPDVTGQETP). One can recognise a bZIP domain in the interval 96–159 (PLSTSKRAAQ…EYIINLQSRL (64 aa)). Residues 97–120 (LSTSKRAAQNRAAQRAFRQRKEAH) form a basic motif region. The leucine-zipper stretch occupies residues 124 to 155 (LEGKVKAYESMGEAIKALQAENYQLREYIINL). Positions 169–280 (LPGNIDLSQP…EQTHGLPLIS (112 aa)) are disordered. A compositionally biased stretch (pro residues) spans 197-206 (APPPTAPQQP).

It belongs to the bZIP family.

The protein resides in the nucleus. Putative transcription factor. The chain is Putative transcription factor kapC (kapC) from Aspergillus fumigatus (strain ATCC MYA-4609 / CBS 101355 / FGSC A1100 / Af293) (Neosartorya fumigata).